Here is a 443-residue protein sequence, read N- to C-terminus: tRNA modification GTPase MnmE (443 aa).

Positions 23, 80, and 120 each coordinate (6S)-5-formyl-5,6,7,8-tetrahydrofolate. Residues Gly217–Ala367 enclose the TrmE-type G domain. GTP contacts are provided by residues Asn227–Ser232, Thr246–Thr252, and Asp271–Gly274. Positions 231 and 252 each coordinate Mg(2+). Lys443 lines the (6S)-5-formyl-5,6,7,8-tetrahydrofolate pocket.

The protein belongs to the TRAFAC class TrmE-Era-EngA-EngB-Septin-like GTPase superfamily. TrmE GTPase family. Homodimer. Heterotetramer of two MnmE and two MnmG subunits. The cofactor is K(+).

Its subcellular location is the cytoplasm. Exhibits a very high intrinsic GTPase hydrolysis rate. Involved in the addition of a carboxymethylaminomethyl (cmnm) group at the wobble position (U34) of certain tRNAs, forming tRNA-cmnm(5)s(2)U34. This is tRNA modification GTPase MnmE from Mesorhizobium japonicum (strain LMG 29417 / CECT 9101 / MAFF 303099) (Mesorhizobium loti (strain MAFF 303099)).